The following is a 292-amino-acid chain: MEITASLVKELRERTGAGMMECKKALVENAGDIDAAAEWLRKSGLAKADKKADRVAAEGRIATAQAGGKAVLVEVNSETDFVAKDENFLAFTDVVANAALNSDATDADALKSVKLDSGETIEERRAAVIAKVGENLQVRRLVRIDSANNVAAYVHGGRIGVLVELKGGDAELARGIAMHIAAMNPPHVKASDVPAEFVAKEKEIELAKMSEKDKAKPAEILEKIISGKISKIVNEVTLYGQPYVLNTDQTVEQAVKAAGAEVIGFQRLAVGEGIEKVVEDYAAEVMKQAGLA.

An involved in Mg(2+) ion dislocation from EF-Tu region spans residues 79 to 82; it reads TDFV.

Belongs to the EF-Ts family.

The protein localises to the cytoplasm. In terms of biological role, associates with the EF-Tu.GDP complex and induces the exchange of GDP to GTP. It remains bound to the aminoacyl-tRNA.EF-Tu.GTP complex up to the GTP hydrolysis stage on the ribosome. The chain is Elongation factor Ts from Xanthomonas campestris pv. campestris (strain ATCC 33913 / DSM 3586 / NCPPB 528 / LMG 568 / P 25).